Consider the following 804-residue polypeptide: Phenylalanine--tRNA ligase beta subunit (804 aa).

In terms of domain architecture, tRNA-binding spans 40 to 153 (PLPDLRVVVG…SSYAVGEPFA (114 aa)). Residues 400 to 476 (PALLVLPFRP…RLHGYDNIEA (77 aa)) enclose the B5 domain. 4 residues coordinate Mg(2+): aspartate 454, aspartate 460, glutamate 463, and glutamate 464. Residues 710-802 (SKFPAVQRDL…AESKLGAVIR (93 aa)) enclose the FDX-ACB domain.

This sequence belongs to the phenylalanyl-tRNA synthetase beta subunit family. Type 1 subfamily. Tetramer of two alpha and two beta subunits. Mg(2+) serves as cofactor.

It localises to the cytoplasm. The enzyme catalyses tRNA(Phe) + L-phenylalanine + ATP = L-phenylalanyl-tRNA(Phe) + AMP + diphosphate + H(+). This Chlorobium luteolum (strain DSM 273 / BCRC 81028 / 2530) (Pelodictyon luteolum) protein is Phenylalanine--tRNA ligase beta subunit.